The following is a 298-amino-acid chain: Lipoyl synthase (298 aa).

Residues C40, C45, C51, C67, C71, C74, and S280 each coordinate [4Fe-4S] cluster. The Radical SAM core domain occupies 53 to 269 (AVRKTATFMI…KEIALSKGFS (217 aa)).

The protein belongs to the radical SAM superfamily. Lipoyl synthase family. [4Fe-4S] cluster serves as cofactor.

The protein localises to the cytoplasm. It carries out the reaction [[Fe-S] cluster scaffold protein carrying a second [4Fe-4S](2+) cluster] + N(6)-octanoyl-L-lysyl-[protein] + 2 oxidized [2Fe-2S]-[ferredoxin] + 2 S-adenosyl-L-methionine + 4 H(+) = [[Fe-S] cluster scaffold protein] + N(6)-[(R)-dihydrolipoyl]-L-lysyl-[protein] + 4 Fe(3+) + 2 hydrogen sulfide + 2 5'-deoxyadenosine + 2 L-methionine + 2 reduced [2Fe-2S]-[ferredoxin]. It functions in the pathway protein modification; protein lipoylation via endogenous pathway; protein N(6)-(lipoyl)lysine from octanoyl-[acyl-carrier-protein]. Catalyzes the radical-mediated insertion of two sulfur atoms into the C-6 and C-8 positions of the octanoyl moiety bound to the lipoyl domains of lipoate-dependent enzymes, thereby converting the octanoylated domains into lipoylated derivatives. The protein is Lipoyl synthase of Bacillus cereus (strain G9842).